The sequence spans 568 residues: Nucleoprotein (568 aa).

The tract at residues 54 to 240 is binding site for the cap structure m7GTP; sequence MRKEKRDDSD…IDGNKSAINI (187 aa). Residues D388 and E390 each coordinate Mn(2+). The Zn(2+) site is built by E398, C505, H508, and C528. Position 532 (D532) interacts with Mn(2+).

This sequence belongs to the arenaviridae nucleocapsid protein family. As to quaternary structure, homomultimerizes to form the nucleocapsid. Binds to viral genomic RNA. Interacts with glycoprotein G2. Interacts with protein Z; this interaction probably directs the encapsidated genome to budding sites. Interacts with protein L; this interaction does not interfere with Z-L interaction. Interacts with host IKBKE (via Protein kinase domain); the interaction inhibits IKBKE kinase activity.

Its subcellular location is the virion. The protein localises to the host cytoplasm. Its function is as follows. Encapsidates the genome, protecting it from nucleases. The encapsidated genomic RNA is termed the nucleocapsid (NC). Serves as template for viral transcription and replication. The increased presence of protein N in host cell does not seem to trigger the switch from transcription to replication as observed in other negative strain RNA viruses. Through the interaction with host IKBKE, strongly inhibits the phosphorylation and nuclear translocation of host IRF3, a protein involved in interferon activation pathway, leading to the inhibition of interferon-beta and IRF3-dependent promoters activation. Also encodes a functional 3'-5' exoribonuclease that degrades preferentially dsRNA substrates and thereby participates in the suppression of interferon induction. This is Nucleoprotein from Praomys (African soft-furred rats).